Here is a 105-residue protein sequence, read N- to C-terminus: uncharacterized protein (105 aa).

The span at 1-11 (MPHRNDRRKSA) shows a compositional bias: basic residues. Residues 1-20 (MPHRNDRRKSASKAPNAIIH) are disordered.

It belongs to the ALB1 family.

It localises to the nucleus. Its subcellular location is the nucleolus. This is an uncharacterized protein from Schizosaccharomyces pombe (strain 972 / ATCC 24843) (Fission yeast).